The chain runs to 859 residues: Protein O-mannosyl-transferase Tmtc1 (859 aa).

The Cytoplasmic portion of the chain corresponds to 1 to 22 (MHTPKCRRPSMSATLSHKDLAG). Residues 23–43 (LAGCSALAFVLYLNTLNAGFV) form a helical membrane-spanning segment. Topologically, residues 44-103 (YDDRRAILANGDVTGARPLANLLRNDFWGTPLVDSGSHGSWRPLCVLSFRLNYLAGGMTP) are extracellular. Residues 104 to 124 (LGYHLVNVMLHCVATWLVFLV) form a helical membrane-spanning segment. Over 125-134 (ARTLLPSRMG) the chain is Cytoplasmic. 2 consecutive transmembrane segments (helical) span residues 135–154 (VLAA…AVAG) and 155–174 (LVGR…YLSY). The Cytoplasmic segment spans residues 175-189 (RRHMLNREWGSLILT). A helical transmembrane segment spans residues 190-210 (IMLALAALLCKETAITALLLC). The Extracellular portion of the chain corresponds to 211–245 (GLCDVLSPVGRENSDKVCDGSISGLASFNFQRRFR). Residues 246-266 (SLSILGFTLLCGLYCRLSLLP) form a helical membrane-spanning segment. The Cytoplasmic portion of the chain corresponds to 267–288 (RPSTAFSAADNPTAHESCFWTR). The helical transmembrane segment at 289-309 (TLTFLYLPVANFGILLWPQEL) threads the bilayer. Topologically, residues 310 to 328 (SFDWGMEAVSRIRTLWDAR) are extracellular. A helical membrane pass occupies residues 329–349 (NILTAGFYGSLVAILWKGSGL). Topologically, residues 350–422 (RSAASPMDFA…SWTAAPILGT (73 aa)) are cytoplasmic. The chain crosses the membrane as a helical span at residues 423-443 (AFLVLPFLPASNLLFYVGFVM). Topologically, residues 444-446 (AER) are extracellular. A helical transmembrane segment spans residues 447 to 467 (VLYLPSVGYCLLFGLGFGHLW). Topologically, residues 468 to 473 (QRVNSS) are cytoplasmic. The helical transmembrane segment at 474–493 (WRSRLMLLCGLALLLGVHGV) threads the bilayer. At 494-859 (RTFRRNLDWR…RMNVHKHENE (366 aa)) the chain is on the extracellular side. TPR repeat units follow at residues 518 to 551 (PKAL…RPTM), 552 to 585 (ADAH…RPQL), 586 to 620 (AVAY…EGSG), 632 to 665 (YTCY…LPLL), 671 to 704 (AVLH…QPEQ), 705 to 739 (GAAY…APLE), 740 to 773 (PSSH…APQD), 774 to 807 (YTLQ…QPMA), and 808 to 841 (AHAH…QPGH). A glycan (N-linked (GlcNAc...) asparagine) is linked at N567. A glycan (N-linked (GlcNAc...) asparagine) is linked at N718.

It belongs to the TMTC family.

It localises to the membrane. It is found in the endoplasmic reticulum. The enzyme catalyses a di-trans,poly-cis-dolichyl beta-D-mannosyl phosphate + L-seryl-[protein] = 3-O-(alpha-D-mannosyl)-L-seryl-[protein] + a di-trans,poly-cis-dolichyl phosphate + H(+). It catalyses the reaction a di-trans,poly-cis-dolichyl beta-D-mannosyl phosphate + L-threonyl-[protein] = 3-O-(alpha-D-mannosyl)-L-threonyl-[protein] + a di-trans,poly-cis-dolichyl phosphate + H(+). The protein operates within protein modification; protein glycosylation. Functionally, transfers mannosyl residues to the hydroxyl group of serine or threonine residues. This chain is Protein O-mannosyl-transferase Tmtc1, found in Drosophila melanogaster (Fruit fly).